A 153-amino-acid chain; its full sequence is Nuclear cap-binding protein subunit 2 (153 aa).

MRNA-binding positions include tyrosine 17, tyrosine 40, 109–113 (RTDWD), 120–124 (RQYGR), and 130–131 (QV). An RRM domain is found at 37-115 (CTLYVGNLSF…RIVRTDWDAG (79 aa)).

The protein belongs to the RRM NCBP2 family. Component of the nuclear cap-binding complex (CBC), a heterodimer composed of ncbp1/cbp80 and ncbp2/cbp20 that interacts with m7GpppG-capped RNA.

It is found in the nucleus. It localises to the cytoplasm. Functionally, component of the cap-binding complex (CBC), which binds co-transcriptionally to the 5' cap of pre-mRNAs and is involved in various processes such as pre-mRNA splicing, translation regulation, nonsense-mediated mRNA decay, RNA-mediated gene silencing (RNAi) by microRNAs (miRNAs) and mRNA export. The CBC complex is involved in mRNA export from the nucleus, leading to the recruitment of the mRNA export machinery to the 5' end of mRNA and to mRNA export in a 5' to 3' direction through the nuclear pore. The CBC complex is also involved in mediating U snRNA and intronless mRNAs export from the nucleus. The CBC complex is essential for a pioneer round of mRNA translation, before steady state translation when the CBC complex is replaced by cytoplasmic cap-binding protein eIF4E. The pioneer round of mRNA translation mediated by the CBC complex plays a central role in nonsense-mediated mRNA decay (NMD), NMD only taking place in mRNAs bound to the CBC complex, but not on eIF4E-bound mRNAs. The CBC complex enhances NMD in mRNAs containing at least one exon-junction complex (EJC), promoting the interaction between upf1 and upf2. The CBC complex is also involved in 'failsafe' NMD, which is independent of the EJC complex, while it does not participate in Staufen-mediated mRNA decay (SMD). During cell proliferation, the CBC complex is also involved in microRNAs (miRNAs) biogenesis via its interaction with srrt/ars2, thereby being required for miRNA-mediated RNA interference. The CBC complex also acts as a negative regulator of parn, thereby acting as an inhibitor of mRNA deadenylation. In the CBC complex, ncbp2/cbp20 recognizes and binds capped RNAs (m7GpppG-capped RNA) but requires ncbp1/cbp80 to stabilize the movement of its N-terminal loop and lock the CBC into a high affinity cap-binding state with the cap structure. The conventional cap-binding complex with NCBP2 binds both small nuclear RNA (snRNA) and messenger (mRNA) and is involved in their export from the nucleus. In Xenopus laevis (African clawed frog), this protein is Nuclear cap-binding protein subunit 2 (ncbp2).